The following is a 390-amino-acid chain: Homoserine O-acetyltransferase (390 aa).

The AB hydrolase-1 domain occupies 55–366; the sequence is NAILINHAFS…ESDCGHDAFL (312 aa). S163 (nucleophile) is an active-site residue. A substrate-binding site is contributed by R232. Catalysis depends on residues D329 and H362. A substrate-binding site is contributed by D363.

It belongs to the AB hydrolase superfamily. MetX family. As to quaternary structure, homodimer.

The protein resides in the cytoplasm. The catalysed reaction is L-homoserine + acetyl-CoA = O-acetyl-L-homoserine + CoA. It functions in the pathway amino-acid biosynthesis; L-methionine biosynthesis via de novo pathway; O-acetyl-L-homoserine from L-homoserine: step 1/1. In terms of biological role, transfers an acetyl group from acetyl-CoA to L-homoserine, forming acetyl-L-homoserine. This Desulfotalea psychrophila (strain LSv54 / DSM 12343) protein is Homoserine O-acetyltransferase.